Reading from the N-terminus, the 147-residue chain is MLTSMVKEHHKEQAKRKQEQEVRRKEAIEASNELTQSLVDTLNVGVAQAYLNQKRLDAEAKQLHLGATNFAKQTHQWLQLIDQFSTALKDLGDVENWARSIEGDMHTINQTLELAYKASRATQTSSGAGTSLEASTSASASANPSAT.

Disordered stretches follow at residues 1–25 (MLTS…VRRK) and 125–147 (SSGA…PSAT).

This sequence belongs to the BLOC1S1 family. As to quaternary structure, component of the biogenesis of lysosome-related organelles complex-1 (BLOC-1) composed of Blos1, Blos2, Blos3, Blos4, Dysb, Muted, Pldn and Snapin. Interacts with Pldn.

Functionally, component of the biogenesis of lysosome-related organelles complex-1 (BLOC-1) involved in pigment granule biogenesis and membrane trafficking in synapses. In response to high synaptic activity at neuromuscular junctions, stabilizes Pldn protein levels and, together with Pldn, plays a role in promoting efficient synaptic vesicle recycling and re-formation through early endosomes. The chain is Biogenesis of lysosome-related organelles complex 1 subunit 1 from Drosophila melanogaster (Fruit fly).